A 169-amino-acid chain; its full sequence is Der GTPase-activating protein YihI (169 aa).

Disordered stretches follow at residues 1-75 and 144-169; these read MKPS…IPLG and GLSYDDDEEEEEDEKQEDMMRLLRGN. The segment covering 10-19 has biased composition (basic residues); that stretch reads SKGHAKARRK. Basic and acidic residues predominate over residues 20 to 30; that stretch reads TREELDQEARD. Over residues 31–40 the composition is skewed to basic residues; the sequence is RKRQKKRRGH. The segment covering 49-58 has biased composition (polar residues); sequence GNTTSGSKGQ. The segment covering 147-159 has biased composition (acidic residues); sequence YDDDEEEEEDEKQ. The span at 160 to 169 shows a compositional bias: basic and acidic residues; that stretch reads EDMMRLLRGN.

It belongs to the YihI family. As to quaternary structure, interacts with Der.

Functionally, a GTPase-activating protein (GAP) that modifies Der/EngA GTPase function. May play a role in ribosome biogenesis. This chain is Der GTPase-activating protein YihI, found in Escherichia coli (strain 55989 / EAEC).